Reading from the N-terminus, the 272-residue chain is 1,4-dihydroxy-6-naphtoate synthase (272 aa).

Residues 55–57 (KLS) and 107–108 (TA) contribute to the substrate site. Residue H145 is the Proton acceptor of the active site.

Belongs to the MqnA/MqnD family. MqnD subfamily.

It catalyses the reaction cyclic dehypoxanthinylfutalosinate = 1,4-dihydroxy-6-naphthoate + dihydroxyacetone. The protein operates within quinol/quinone metabolism; menaquinone biosynthesis. In terms of biological role, catalyzes the conversion of cyclic dehypoxanthine futalosine (cyclic DHFL) into 1,4-dihydroxy-6-naphthoate, a step in the biosynthesis of menaquinone (MK, vitamin K2). The polypeptide is 1,4-dihydroxy-6-naphtoate synthase (Thermus thermophilus (strain ATCC 27634 / DSM 579 / HB8)).